Here is a 426-residue protein sequence, read N- to C-terminus: MTKSEQLFERAVKHLPGGVNSPVRAFLSVGGSPRFIESADGAYIYDVDGNKYIDYINSWGPMILGHNHEVIRTAVIEAAQKGLSYGAATEAEVEMAELLCEIVPCFEMVRMVNSGTEAVMSAIRAARGYTKRNKIIKFEGCYHGHSDGLLVKAGSGVMVAGIPDSMGVPSNCVKDTLQAKYNNLDSVIELFKQNKDEIAAIIVEPVAANMGVVLPEEGFLEGLRELCTKHGALLIFDEVITGFRLSLSGAQGYYNIIPDLATFGKIIGGGMPVGCYGGRREIMEMVAPVGPVYQAGTLSGNPVAMAAGMAQLKYLKEHPEVYTKINELGEYFRNKVNELFDKYNIKYQVSGVGSLACIFFADSRVTDYETAKLADTKEFARYFRFMLEHGIYIAPAQFEAMFFSNAHTYQDIEDTLLVIEQYLKIQ.

Lysine 265 is subject to N6-(pyridoxal phosphate)lysine.

Belongs to the class-III pyridoxal-phosphate-dependent aminotransferase family. HemL subfamily. In terms of assembly, homodimer. The cofactor is pyridoxal 5'-phosphate.

It localises to the cytoplasm. It carries out the reaction (S)-4-amino-5-oxopentanoate = 5-aminolevulinate. The protein operates within porphyrin-containing compound metabolism; protoporphyrin-IX biosynthesis; 5-aminolevulinate from L-glutamyl-tRNA(Glu): step 2/2. This is Glutamate-1-semialdehyde 2,1-aminomutase 2 from Lachnoclostridium phytofermentans (strain ATCC 700394 / DSM 18823 / ISDg) (Clostridium phytofermentans).